The sequence spans 198 residues: Linker for activation of T-cells family member 2 (198 aa).

The Extracellular portion of the chain corresponds to Met-1–Pro-4. A helical; Signal-anchor for type III membrane protein membrane pass occupies residues Glu-5–Val-24. S-palmitoyl cysteine attachment occurs at residues Cys-23 and Cys-26. Residues Arg-25–Lys-198 lie on the Cytoplasmic side of the membrane. Tyr-136, Tyr-155, and Tyr-184 each carry phosphotyrosine.

In terms of assembly, when phosphorylated, interacts with GRB2. In terms of processing, phosphorylated on tyrosines following cross-linking of BCR; which induces the recruitment of GRB2.

Its subcellular location is the cell membrane. Functionally, involved in BCR (B-cell antigen receptor)-mediated signaling in B-cells. May also be involved in FCER1 (high affinity immunoglobulin epsilon receptor)-mediated signaling in mast cells and FCGR1 (high affinity immunoglobulin gamma Fc receptor I)-mediated signaling in myeloid cells. Couples activation of these receptors and their associated kinases with distal intracellular events such as calcium mobilization through the recruitment of GRB2. This Gallus gallus (Chicken) protein is Linker for activation of T-cells family member 2 (LAT2).